An 862-amino-acid chain; its full sequence is Probable linoleate 9S-lipoxygenase 5 (862 aa).

Residues Asn-36–Ala-161 form the PLAT domain. Residues Ala-164–Ile-862 form the Lipoxygenase domain. The Fe cation site is built by His-523, His-528, His-714, Asn-718, and Ile-862.

It belongs to the lipoxygenase family. Monomer. Fe cation serves as cofactor. As to expression, not detected in leaves, stems, flowers, roots, tubers and stolons during normal growth and development.

It is found in the cytoplasm. The catalysed reaction is (9Z,12Z)-octadecadienoate + O2 = (9S)-hydroperoxy-(10E,12Z)-octadecadienoate. It participates in lipid metabolism; oxylipin biosynthesis. In terms of biological role, plant lipoxygenases may be involved in a number of diverse aspects of plant physiology including growth and development, pest resistance, and senescence or responses to wounding. May contribute to cell death during the hypersensitive response (HR) by the massive production of free fatty acid hydroperoxides. Catalyzes the hydroperoxidation of lipids containing a cis,cis-1,4-pentadiene structure. The protein is Probable linoleate 9S-lipoxygenase 5 (LOX1.5) of Solanum tuberosum (Potato).